A 945-amino-acid chain; its full sequence is Bifunctional glutamine synthetase adenylyltransferase/adenylyl-removing enzyme (945 aa).

The adenylyl removase stretch occupies residues 1-440; it reads MMPLSPQLQQ…VFNELIGDDE (440 aa). Residues 449–945 form an adenylyl transferase region; it reads AEYWRELWQD…SASWQKWLMA (497 aa).

It belongs to the GlnE family. The cofactor is Mg(2+).

It catalyses the reaction [glutamine synthetase]-O(4)-(5'-adenylyl)-L-tyrosine + phosphate = [glutamine synthetase]-L-tyrosine + ADP. The enzyme catalyses [glutamine synthetase]-L-tyrosine + ATP = [glutamine synthetase]-O(4)-(5'-adenylyl)-L-tyrosine + diphosphate. Its function is as follows. Involved in the regulation of glutamine synthetase GlnA, a key enzyme in the process to assimilate ammonia. When cellular nitrogen levels are high, the C-terminal adenylyl transferase (AT) inactivates GlnA by covalent transfer of an adenylyl group from ATP to specific tyrosine residue of GlnA, thus reducing its activity. Conversely, when nitrogen levels are low, the N-terminal adenylyl removase (AR) activates GlnA by removing the adenylyl group by phosphorolysis, increasing its activity. The regulatory region of GlnE binds the signal transduction protein PII (GlnB) which indicates the nitrogen status of the cell. The sequence is that of Bifunctional glutamine synthetase adenylyltransferase/adenylyl-removing enzyme from Klebsiella pneumoniae subsp. pneumoniae (strain ATCC 700721 / MGH 78578).